The chain runs to 166 residues: Transmembrane protein 190 (166 aa).

The signal sequence occupies residues 1-21; the sequence is MVGSGISALGLLLLMQGSVDA. Residues 22–81 are Extracellular-facing; it reads NGIQGFFYPWSCEGDVWDRESCGGQAAIENPNLCLRLRCCYRDGVCYHQRPDENMRRKHM. The P-type domain maps to 31–71; it reads WSCEGDVWDRESCGGQAAIENPNLCLRLRCCYRDGVCYHQR. 3 disulfide bridges follow: Cys-33-Cys-61, Cys-43-Cys-60, and Cys-55-Cys-67. The chain crosses the membrane as a helical span at residues 82–102; sequence WALGWTCGSLLFLITSICLFW. The Cytoplasmic portion of the chain corresponds to 103–166; that stretch reads WARRQDMLHL…VSGEDTGGEE (64 aa). The tract at residues 130 to 166 is disordered; it reads LSKDRRSANKSTTVLQSPGGEVETAAAVSGEDTGGEE.

Detected in testis and in a mixture of spermatogenic cells at various stages (testicular germ cells). Not detected in heart, brain, spleen, lung, liver, skeletal muscle and kidney.

The protein localises to the membrane. In Mus musculus (Mouse), this protein is Transmembrane protein 190 (Tmem190).